We begin with the raw amino-acid sequence, 301 residues long: Homoserine O-acetyltransferase (301 aa).

C142 acts as the Acyl-thioester intermediate in catalysis. K163 and S192 together coordinate substrate. The Proton acceptor role is filled by H235. E237 is a catalytic residue. R249 contacts substrate.

The protein belongs to the MetA family.

Its subcellular location is the cytoplasm. The catalysed reaction is L-homoserine + acetyl-CoA = O-acetyl-L-homoserine + CoA. It participates in amino-acid biosynthesis; L-methionine biosynthesis via de novo pathway; O-acetyl-L-homoserine from L-homoserine: step 1/1. Its function is as follows. Transfers an acetyl group from acetyl-CoA to L-homoserine, forming acetyl-L-homoserine. This chain is Homoserine O-acetyltransferase, found in Lachnoclostridium phytofermentans (strain ATCC 700394 / DSM 18823 / ISDg) (Clostridium phytofermentans).